We begin with the raw amino-acid sequence, 233 residues long: Uridylate kinase (233 aa).

An ATP-binding site is contributed by 9 to 10 (GS). Gly43 lines the UMP pocket. Positions 44 and 48 each coordinate ATP. UMP contacts are provided by residues Asp65 and 113–119 (VTPGQTT). Residues Thr139, Tyr145, and Asp148 each coordinate ATP.

This sequence belongs to the UMP kinase family. As to quaternary structure, homohexamer.

It localises to the cytoplasm. It carries out the reaction UMP + ATP = UDP + ADP. It functions in the pathway pyrimidine metabolism; CTP biosynthesis via de novo pathway; UDP from UMP (UMPK route): step 1/1. Inhibited by UTP. Functionally, catalyzes the reversible phosphorylation of UMP to UDP. The protein is Uridylate kinase of Methanosarcina acetivorans (strain ATCC 35395 / DSM 2834 / JCM 12185 / C2A).